The following is a 304-amino-acid chain: Mitochondrial glycine transporter (304 aa).

Solcar repeat units follow at residues 3–82 (GKSK…VREA), 106–186 (ENLI…LKVA), and 209–293 (SSAM…LVKR). The next 6 helical transmembrane spans lie at 9–34 (IYAGFTSGLVSAVVLQPFDLLKTRVQ), 57–83 (GTLPSALRMSVGSAMYFTCLNTVREAV), 108–133 (LISGGLVRGTVGLLVMPITVIKVRYE), 161–184 (GWAATFARDAPYAGLYMLFYEQLK), 213–239 (INSVAAATSAGIATTCTNPFDTVKTRM), and 268–286 (GLALRICRKACQAGISWCI).

The protein belongs to the mitochondrial carrier (TC 2.A.29) family. SLC25A38 subfamily.

It is found in the mitochondrion inner membrane. It catalyses the reaction glycine(in) = glycine(out). Mitochondrial glycine transporter that imports glycine into the mitochondrial matrix. Plays an important role in providing glycine for the first enzymatic step in heme biosynthesis, the condensation of glycine with succinyl-CoA to produce 5-aminolevulinate (ALA) in the mitochondrial matrix. This chain is Mitochondrial glycine transporter, found in Yarrowia lipolytica (strain CLIB 122 / E 150) (Yeast).